Consider the following 292-residue polypeptide: tRNA-cytidine(32) 2-sulfurtransferase (292 aa).

Positions S54–S59 match the PP-loop motif motif. [4Fe-4S] cluster contacts are provided by C129, C132, and C220.

This sequence belongs to the TtcA family. As to quaternary structure, homodimer. It depends on Mg(2+) as a cofactor. [4Fe-4S] cluster serves as cofactor.

It localises to the cytoplasm. The enzyme catalyses cytidine(32) in tRNA + S-sulfanyl-L-cysteinyl-[cysteine desulfurase] + AH2 + ATP = 2-thiocytidine(32) in tRNA + L-cysteinyl-[cysteine desulfurase] + A + AMP + diphosphate + H(+). The protein operates within tRNA modification. Functionally, catalyzes the ATP-dependent 2-thiolation of cytidine in position 32 of tRNA, to form 2-thiocytidine (s(2)C32). The sulfur atoms are provided by the cysteine/cysteine desulfurase (IscS) system. The protein is tRNA-cytidine(32) 2-sulfurtransferase of Cereibacter sphaeroides (strain ATCC 17025 / ATH 2.4.3) (Rhodobacter sphaeroides).